A 267-amino-acid chain; its full sequence is GRYTVQNQWGGSSAPWNDAGVFVLGGRANQNVMAIDVSSSDGGKTLTGTMTYSGEGPIGFKGTRRGESNNYEVENQWGGSSAPWHPAGTFVIGSRSGQAVVAMNVTSHDGGKTLSGHMTYENEGPIGFKGTQAEGDTYNVENQWGGSSAPWNKAGVWALGSRASQGVVKLDVSSSDGGKTLTGTMQYQNEGPIGFRGTLTGANNYKAENQWGGSSGAWNPAGLWLIGDRHNQNIIGVKVTSDDNGKTLEGTCTYYREGPIGFKGVAN.

4 consecutive repeat copies span residues 1-67 (GRYT…RRGE), 68-135 (SNNY…QAEG), 136-202 (DTYN…LTGA), and 203-267 (NNYK…GVAN). A 4 X approximate tandem repeats region spans residues 1-267 (GRYTVQNQWG…GPIGFKGVAN (267 aa)).

Monomer.

Lectin specific for high mannose N-glycans, recognizes the branched moiety of these glycans. Does not recognize other types of N-glycans or monosaccharides. This Solieria filiformis (Red alga) protein is Lectin SfL-2.